We begin with the raw amino-acid sequence, 1086 residues long: NAD(P) transhydrogenase, mitochondrial (1086 aa).

The transit peptide at 1–43 (MANLLKTVVTGCSCPLLSNLGSCKGLRVKKDFLRTFYTHQELW) directs the protein to the mitochondrion. Residues 44 to 474 (CKAPVKPGIP…TITPFRKTMS (431 aa)) lie on the Mitochondrial matrix side of the membrane. Residue Lys-70 is modified to N6-acetyllysine. Lys-117 carries the post-translational modification N6-succinyllysine. Position 182–184 (182–184 (RVT)) interacts with NAD(+). N6-succinyllysine is present on Lys-224. NAD(+) is bound by residues Val-237, 257 to 259 (DTR), and Gly-287. Lys-294 is subject to N6-succinyllysine. 2 residues coordinate NAD(+): Glu-300 and Leu-319. Residue Lys-331 is modified to N6-succinyllysine. Lys-397 bears the N6-acetyllysine mark. 4 helical membrane-spanning segments follow: residues 475–493 (TASAYTAGLTGILGLGIAA), 501–521 (MVTTFGLAGIVGYHTVWGVTP), 527–546 (LMSVTNAISGLTAVGGLALM), and 558–578 (GLAALAAFISSVNIAGGFLVT). Residues 579 to 595 (QRMLDMFKRPTDPPEYN) are Mitochondrial matrix-facing. 5 helical membrane passes run 596-616 (YLYLLPAGTFVGGYLAALYSG), 622-642 (IMYLGSGLCCVGALAGLSTQG), 646-666 (LGNALGMIGVAGGLAATLGVL), 672-691 (LLAQMSGAMALGGTIGLTIA), and 702-722 (LVAAFHSLVGLAAVLTCIAEY). The Cytoplasmic segment spans residues 723–739 (IIEYPHFATDAAANLTK). 5 consecutive transmembrane segments (helical) span residues 740 to 760 (IVAYLGTYIGGVTFSGSLIAY), 778 to 797 (HLLNAGLLAASVGGIIPFMV), 801 to 819 (FTTGITCLGSVSALSAVMG), 833 to 853 (VVITVLNSYSGWALCAEGFLL), and 857 to 879 (LLTIVGALIGSSGAILSYIMCVA). The Mitochondrial matrix segment spans residues 880–1086 (MNRSLANVIL…QAKVRESYQK (207 aa)). Residues Tyr-933, 965–970 (VAGRMP), 1007–1011 (GANDT), 1026–1027 (GM), 1042–1049 (KRSLGVGY), and 1068–1069 (DA) contribute to the NADP(+) site. At Lys-1079 the chain carries N6-succinyllysine.

In the N-terminal section; belongs to the AlaDH/PNT family. The protein in the C-terminal section; belongs to the PNT beta subunit family. As to quaternary structure, homodimer. In terms of tissue distribution, widely expressed with expression most readily detectable in adrenal, heart, kidney, thyroid and adipose tissues.

The protein resides in the mitochondrion inner membrane. The enzyme catalyses NAD(+) + NADPH + H(+)(in) = NADH + NADP(+) + H(+)(out). In terms of biological role, the transhydrogenation between NADH and NADP is coupled to respiration and ATP hydrolysis and functions as a proton pump across the membrane. May play a role in reactive oxygen species (ROS) detoxification in the adrenal gland. This Homo sapiens (Human) protein is NAD(P) transhydrogenase, mitochondrial (NNT).